Reading from the N-terminus, the 46-residue chain is Phoratoxin (46 aa).

Intrachain disulfides connect Cys-3/Cys-40, Cys-4/Cys-32, and Cys-16/Cys-26. Residue His-46 is modified to Blocked carboxyl end (His).

It belongs to the plant thionin (TC 1.C.44) family.

The protein resides in the secreted. Thionins are small plant proteins which are toxic to animal cells. They seem to exert their toxic effect at the level of the cell membrane. Their precise function is not known. This chain is Phoratoxin, found in Phoradendron leucarpum subsp. tomentosum (California mistletoe).